Here is a 113-residue protein sequence, read N- to C-terminus: Hydrogenase maturation factor HypA (113 aa).

Histidine 2 is a Ni(2+) binding site. Zn(2+)-binding residues include cysteine 73, cysteine 76, cysteine 89, and cysteine 92.

This sequence belongs to the HypA/HybF family.

Its function is as follows. Involved in the maturation of [NiFe] hydrogenases. Required for nickel insertion into the metal center of the hydrogenase. This Rhodopseudomonas palustris (strain BisB5) protein is Hydrogenase maturation factor HypA.